The sequence spans 1171 residues: ATP-dependent helicase/deoxyribonuclease subunit B (1171 aa).

This sequence belongs to the helicase family. AddB/RexB type 2 subfamily. In terms of assembly, heterodimer of AddA and RexB. Requires Mg(2+) as cofactor.

In terms of biological role, the heterodimer acts as both an ATP-dependent DNA helicase and an ATP-dependent, dual-direction single-stranded exonuclease. Recognizes the chi site generating a DNA molecule suitable for the initiation of homologous recombination. This subunit has 5' -&gt; 3' nuclease activity but not helicase activity. This is ATP-dependent helicase/deoxyribonuclease subunit B from Leuconostoc citreum (strain KM20).